Here is a 262-residue protein sequence, read N- to C-terminus: Nickel import ATP-binding protein NikD (262 aa).

Residues 6 to 249 (LAIEGLTATT…PGHEVTRMLV (244 aa)) form the ABC transporter domain. An ATP-binding site is contributed by 42–49 (GASGSGKS).

Belongs to the ABC transporter superfamily. Nickel importer (TC 3.A.1.5.3) family. As to quaternary structure, the complex is composed of two ATP-binding proteins (NikD and NikE), two transmembrane proteins (NikB and NikC) and a solute-binding protein (NikA).

Its subcellular location is the cell inner membrane. It catalyses the reaction Ni(2+)(out) + ATP + H2O = Ni(2+)(in) + ADP + phosphate + H(+). In terms of biological role, part of the ABC transporter complex NikABCDE involved in nickel import. Responsible for energy coupling to the transport system. This is Nickel import ATP-binding protein NikD from Brucella abortus biovar 1 (strain 9-941).